Reading from the N-terminus, the 355-residue chain is 3-dehydroquinate synthase (355 aa).

NAD(+) contacts are provided by residues 71–76 (EGEASK), 105–109 (GVVGD), 129–130 (TS), lysine 142, lysine 151, and 169–172 (TLKT). Residues glutamate 184, histidine 246, and histidine 263 each contribute to the Zn(2+) site.

This sequence belongs to the sugar phosphate cyclases superfamily. Dehydroquinate synthase family. Requires Co(2+) as cofactor. Zn(2+) serves as cofactor. It depends on NAD(+) as a cofactor.

The protein localises to the cytoplasm. The catalysed reaction is 7-phospho-2-dehydro-3-deoxy-D-arabino-heptonate = 3-dehydroquinate + phosphate. It participates in metabolic intermediate biosynthesis; chorismate biosynthesis; chorismate from D-erythrose 4-phosphate and phosphoenolpyruvate: step 2/7. Catalyzes the conversion of 3-deoxy-D-arabino-heptulosonate 7-phosphate (DAHP) to dehydroquinate (DHQ). This is 3-dehydroquinate synthase from Streptococcus suis (strain 98HAH33).